A 354-amino-acid polypeptide reads, in one-letter code: Uroporphyrinogen decarboxylase (354 aa).

Substrate is bound by residues 27-31 (RQAGR), Asp-77, Tyr-153, Thr-208, and His-326.

This sequence belongs to the uroporphyrinogen decarboxylase family. Homodimer.

It is found in the cytoplasm. It carries out the reaction uroporphyrinogen III + 4 H(+) = coproporphyrinogen III + 4 CO2. It participates in porphyrin-containing compound metabolism; protoporphyrin-IX biosynthesis; coproporphyrinogen-III from 5-aminolevulinate: step 4/4. Catalyzes the decarboxylation of four acetate groups of uroporphyrinogen-III to yield coproporphyrinogen-III. This is Uroporphyrinogen decarboxylase from Neisseria gonorrhoeae (strain NCCP11945).